The sequence spans 858 residues: Ubiquitin carboxyl-terminal hydrolase 5 (858 aa).

N-acetylalanine is present on A2. The interval 74-96 (RRTRRPKEEDPTTGTGDPPRKKP) is disordered. Residue K113 forms a Glycyl lysine isopeptide (Lys-Gly) (interchain with G-Cter in SUMO) linkage. A phosphoserine mark is found at S149 and S156. The UBP-type; degenerate zinc finger occupies 175 to 283 (QVSKHAFSLK…EHLSHFGIDM (109 aa)). A disulfide bridge links C195 with C816. Positions 199 and 202 each coordinate Zn(2+). W209 is a binding site for substrate. C219 is a binding site for Zn(2+). 221–224 (RRYF) provides a ligand contact to substrate. Zn(2+) is bound at residue H232. Substrate contacts are provided by Y259, Y261, and D264. T292 is modified (phosphothreonine). The USP domain maps to 326 to 856 (TGIRNLGNSC…LGYIYFYQRV (531 aa)). The active-site Nucleophile is the C335. T623 bears the Phosphothreonine mark. UBA domains are found at residues 654–695 (MLDE…VMSH) and 722–762 (PPPE…IFSH). A phosphoserine mark is found at S779, S783, and S785. H818 acts as the Proton acceptor in catalysis.

The protein belongs to the peptidase C19 family. In terms of assembly, homodimer. Interacts with TRIML1. Ubiquitinated by SMURF1; leading to proteasomal degradation. Post-translationally, SUMOylated at Lys-113; SUMOylation affects the interaction with Cav3.2 channels.

It is found in the cytoplasm. The protein localises to the stress granule. The protein resides in the nucleus. The enzyme catalyses Thiol-dependent hydrolysis of ester, thioester, amide, peptide and isopeptide bonds formed by the C-terminal Gly of ubiquitin (a 76-residue protein attached to proteins as an intracellular targeting signal).. Its function is as follows. Deubiquitinating enzyme that participates in a wide range of cellular processes by specifically cleaving isopeptide bonds between ubiquitin and substrate proteins or ubiquitin itself. Affects thereby important cellular signaling pathways such as NF-kappa-B, Wnt/beta-catenin, and cytokine production by regulating ubiquitin-dependent protein degradation. Participates in the activation of the Wnt signaling pathway by promoting FOXM1 deubiquitination and stabilization that induces the recruitment of beta-catenin to Wnt target gene promoter. Regulates the assembly and disassembly of heat-induced stress granules by mediating the hydrolysis of unanchored ubiquitin chains. Promotes lipopolysaccharide-induced apoptosis and inflammatory response by stabilizing the TXNIP protein. Affects T-cell biology by stabilizing the inhibitory receptor on T-cells PDC1. Acts as a negative regulator of autophagy by regulating ULK1 at both protein and mRNA levels. Acts also as a negative regulator of type I interferon production by simultaneously removing both 'Lys-48'-linked unanchored and 'Lys-63'-linked anchored polyubiquitin chains on the transcription factor IRF3. Modulates the stability of DNA mismatch repair protein MLH1 and counteracts the effect of the ubiquitin ligase UBR4. Upon activation by insulin, it gets phosphorylated through mTORC1-mediated phosphorylation to enhance YTHDF1 stability by removing 'Lys-11'-linked polyubiquitination. May also deubiquitinate other substrates such as the calcium channel CACNA1H. The sequence is that of Ubiquitin carboxyl-terminal hydrolase 5 (UBP5) from Pongo abelii (Sumatran orangutan).